Reading from the N-terminus, the 310-residue chain is Putrescinyltransferase (310 aa).

It belongs to the thymidine aminotransferase family.

It carries out the reaction 5-phosphomethyl-dUMP in DNA + putrescine = 5-N(alpha)-putrescinyl-dTMP in DNA + phosphate. Its function is as follows. Transfers putrescine to 5-phosphomethyl-2'-deoxyuridine (5-PmdU) to produce 5-Nalpha-putrescinylthymidine (Nalpha-PutT) as a step in the pathway leading to thymidine hypermodifications in the viral genome. As a final result of the pathway of hypermodification, Nalpha-PutT substitutes for about 50% of thymidines in the viral DNA. These modifications probably prevent degradation of viral genome by the host restriction-modification antiviral defense system. This is Putrescinyltransferase from Delftia phage PhiW-14 (Deftia acidovorans bacteriophage phiW-14).